The chain runs to 144 residues: Large ribosomal subunit protein uL13 (144 aa).

This sequence belongs to the universal ribosomal protein uL13 family. Part of the 50S ribosomal subunit.

This protein is one of the early assembly proteins of the 50S ribosomal subunit, although it is not seen to bind rRNA by itself. It is important during the early stages of 50S assembly. The sequence is that of Large ribosomal subunit protein uL13 from Magnetococcus marinus (strain ATCC BAA-1437 / JCM 17883 / MC-1).